Consider the following 754-residue polypeptide: Fibronectin type III domain-containing protein 1 (754 aa).

The first 19 residues, 1 to 19 (MKSWISISFLCMLFPLSNG), serve as a signal peptide directing secretion. Disordered stretches follow at residues 40–61 (SLQG…SQGG), 85–106 (AQIS…TQFS), and 130–163 (AQHS…AQSG). Low complexity predominate over residues 130 to 161 (AQHSQAGAQGSQFPQSAAHTAQHHQGTAQPAQ). Fibronectin type-III domains are found at residues 250 to 355 (PPQS…TPDL), 359 to 449 (APLN…TDKF), 453 to 545 (APRN…TKMD), 549 to 642 (EPMS…LPKP), and 645 to 742 (LVPN…SFPG). The interval 731–754 (SNLSSQQFSFPGQQVGQQQSNPWI) is disordered.

Prismatic layer of shell (at protein level). Expressed primarily in the mantle with highest level in the outer epithelium of the mantle edge and lower level in the mantle pallium.

The protein resides in the secreted. This Margaritifera margaritifera (Freshwater pearl mussel) protein is Fibronectin type III domain-containing protein 1.